The sequence spans 337 residues: Ornithine carbamoyltransferase, catabolic (337 aa).

Residues 57 to 60 (STRT), Q84, R108, and 135 to 138 (HPTQ) each bind carbamoyl phosphate. L-ornithine contacts are provided by residues N167, D231, and 235-236 (SM). Residues 272-273 (CL) and R317 each bind carbamoyl phosphate.

Belongs to the aspartate/ornithine carbamoyltransferase superfamily. OTCase family.

It is found in the cytoplasm. The enzyme catalyses carbamoyl phosphate + L-ornithine = L-citrulline + phosphate + H(+). It participates in amino-acid degradation; L-arginine degradation via ADI pathway; carbamoyl phosphate from L-arginine: step 2/2. Its function is as follows. Reversibly catalyzes the transfer of the carbamoyl group from carbamoyl phosphate (CP) to the N(epsilon) atom of ornithine (ORN) to produce L-citrulline. This Streptococcus agalactiae protein is Ornithine carbamoyltransferase, catabolic (arcB).